The following is a 466-amino-acid chain: Cysteine--tRNA ligase (466 aa).

Cys29 provides a ligand contact to Zn(2+). Residues 31–41 (PTVYNYIHIGN) carry the 'HIGH' region motif. Residues Cys209, His234, and Glu238 each contribute to the Zn(2+) site. The 'KMSKS' region signature appears at 266-270 (KMSKS). Lys269 contributes to the ATP binding site. The residue at position 270 (Ser270) is a Phosphoserine.

It belongs to the class-I aminoacyl-tRNA synthetase family. Monomer. Zn(2+) is required as a cofactor.

It localises to the cytoplasm. It catalyses the reaction tRNA(Cys) + L-cysteine + ATP = L-cysteinyl-tRNA(Cys) + AMP + diphosphate. The polypeptide is Cysteine--tRNA ligase (cysS) (Halalkalibacterium halodurans (strain ATCC BAA-125 / DSM 18197 / FERM 7344 / JCM 9153 / C-125) (Bacillus halodurans)).